Consider the following 137-residue polypeptide: MRGLKSNKPKPRIQKVSVRKFRRKVLSLSQILSRLRQKRNQKIEQQKRNKPIKPLIPPKTLVIVLKEKPEKTLYNRRYIDYKHSGLLQRYIGLGGKILPRRQTRLTAKQQRFVAKTIKTARVMGLLPFVSKERSFFK.

Belongs to the bacterial ribosomal protein bS18 family. Part of the 30S ribosomal subunit.

It localises to the plastid. It is found in the chloroplast. This Chlamydomonas reinhardtii (Chlamydomonas smithii) protein is Small ribosomal subunit protein bS18c (rps18).